The chain runs to 652 residues: DNA mismatch repair protein MutL (652 aa).

This sequence belongs to the DNA mismatch repair MutL/HexB family.

This protein is involved in the repair of mismatches in DNA. It is required for dam-dependent methyl-directed DNA mismatch repair. May act as a 'molecular matchmaker', a protein that promotes the formation of a stable complex between two or more DNA-binding proteins in an ATP-dependent manner without itself being part of a final effector complex. The protein is DNA mismatch repair protein MutL of Neorickettsia sennetsu (strain ATCC VR-367 / Miyayama) (Ehrlichia sennetsu).